A 660-amino-acid chain; its full sequence is Macrolide export ATP-binding/permease protein MacB (660 aa).

In terms of domain architecture, ABC transporter spans 10–248; the sequence is LVLENIVRKF…AKGQALQGKQ (239 aa). 46–53 serves as a coordination point for ATP; sequence GASGSGKS. 4 helical membrane passes run 285–305, 532–552, 593–613, and 625–645; these read FLTMLGVIIGIAAIIAMVALG, ILTLLVSSIAAISLIVGGIGV, IIGGGVGILFGLSIGGLFVLF, and SIIISLTFSTLIGICFGFSPA.

Belongs to the ABC transporter superfamily. Macrolide exporter (TC 3.A.1.122) family. As to quaternary structure, homodimer.

The protein resides in the cell inner membrane. Functionally, non-canonical ABC transporter that contains transmembrane domains (TMD), which form a pore in the inner membrane, and an ATP-binding domain (NBD), which is responsible for energy generation. Confers resistance against macrolides. The chain is Macrolide export ATP-binding/permease protein MacB from Bartonella quintana (strain Toulouse) (Rochalimaea quintana).